The sequence spans 314 residues: Ribonuclease Z (314 aa).

7 residues coordinate Zn(2+): H61, H63, D65, H66, H137, D207, and H263. Catalysis depends on D65, which acts as the Proton acceptor.

Belongs to the RNase Z family. As to quaternary structure, homodimer. The cofactor is Zn(2+).

The enzyme catalyses Endonucleolytic cleavage of RNA, removing extra 3' nucleotides from tRNA precursor, generating 3' termini of tRNAs. A 3'-hydroxy group is left at the tRNA terminus and a 5'-phosphoryl group is left at the trailer molecule.. In terms of biological role, zinc phosphodiesterase, which displays some tRNA 3'-processing endonuclease activity. Probably involved in tRNA maturation, by removing a 3'-trailer from precursor tRNA. In Thermococcus gammatolerans (strain DSM 15229 / JCM 11827 / EJ3), this protein is Ribonuclease Z.